We begin with the raw amino-acid sequence, 114 residues long: Putative neurotoxin 7 (114 aa).

It belongs to the scolopendra neurotoxin 8 family. Post-translationally, contains 3 disulfide bonds. In terms of tissue distribution, expressed by the venom gland.

It localises to the secreted. This chain is Putative neurotoxin 7, found in Scolopendra mutilans (Chinese red-headed centipede).